Consider the following 199-residue polypeptide: Peptidyl-tRNA hydrolase (199 aa).

TRNA is bound at residue Tyr15. His20 (proton acceptor) is an active-site residue. TRNA contacts are provided by Phe66, Asn68, and Asn114.

This sequence belongs to the PTH family. As to quaternary structure, monomer.

The protein resides in the cytoplasm. It carries out the reaction an N-acyl-L-alpha-aminoacyl-tRNA + H2O = an N-acyl-L-amino acid + a tRNA + H(+). Hydrolyzes ribosome-free peptidyl-tRNAs (with 1 or more amino acids incorporated), which drop off the ribosome during protein synthesis, or as a result of ribosome stalling. In terms of biological role, catalyzes the release of premature peptidyl moieties from peptidyl-tRNA molecules trapped in stalled 50S ribosomal subunits, and thus maintains levels of free tRNAs and 50S ribosomes. The polypeptide is Peptidyl-tRNA hydrolase (Cupriavidus pinatubonensis (strain JMP 134 / LMG 1197) (Cupriavidus necator (strain JMP 134))).